Reading from the N-terminus, the 245-residue chain is Ureidoacrylate amidohydrolase RutB (245 aa).

Asp41 serves as the catalytic Proton acceptor. Lys150 is a catalytic residue. Cys183 (nucleophile) is an active-site residue.

The protein belongs to the isochorismatase family. RutB subfamily.

The enzyme catalyses (Z)-3-ureidoacrylate + H2O + H(+) = (Z)-3-aminoacrylate + NH4(+) + CO2. It catalyses the reaction (Z)-3-ureidoacrylate + H2O = (Z)-3-aminoacrylate + carbamate + H(+). It carries out the reaction (Z)-2-methylureidoacrylate + H2O + H(+) = (Z)-2-methylaminoacrylate + NH4(+) + CO2. Hydrolyzes ureidoacrylate to form aminoacrylate and carbamate. The carbamate hydrolyzes spontaneously, thereby releasing one of the nitrogen atoms of the pyrimidine ring as ammonia and one of its carbon atoms as CO2. This is Ureidoacrylate amidohydrolase RutB from Pseudomonas syringae pv. syringae (strain B728a).